The sequence spans 165 residues: Putative defense protein Hdd11 (165 aa).

An N-terminal signal peptide occupies residues 1 to 17 (MWATYVFIAVSLACANG). Positions 18–165 (YSSGAPESVC…VESGPVKVIS (148 aa)) constitute a Reelin domain. Residues C27 and C104 are joined by a disulfide bond.

It belongs to the insect defense protein family.

The protein localises to the secreted. In terms of biological role, as this protein is expressed upon bacterial infection, it may have antimicrobial activity. The sequence is that of Putative defense protein Hdd11 from Hyphantria cunea (Fall webworm moth).